Here is a 29-residue protein sequence, read N- to C-terminus: 28 kDa protein (29 aa).

This chain is 28 kDa protein, found in Tritrichomonas foetus (Trichomonas foetus).